The primary structure comprises 597 residues: Mediator of RNA polymerase II transcription subunit 26 (597 aa).

A TFIIS N-terminal domain is found at 10 to 87 (EIRERLLQAI…RNWQKLIEPV (78 aa)). Disordered regions lie at residues 96-236 (GIPN…VKHP), 254-418 (LDDA…ARVK), and 436-459 (TLKD…TDKQ). The segment covering 128–147 (QELKGRNDIQKAHSPKADKT) has biased composition (basic and acidic residues). The span at 226 to 236 (HTNSPGLVKHP) shows a compositional bias: polar residues. Over residues 262–273 (PRSPRCSSFSPR) the composition is skewed to low complexity. Residues 321 to 338 (KRLESPRQDRVSSPHKPV) are compositionally biased toward basic and acidic residues. Polar residues predominate over residues 341–377 (LPSTDCHQVLPRTSQQHIPRSSLVDSQTPRTGFSPES). A compositionally biased stretch (basic and acidic residues) spans 450 to 459 (EQHRTETDKQ).

Belongs to the Mediator complex subunit 26 family. Component of the Mediator complex.

The protein localises to the nucleus. In terms of biological role, component of the Mediator complex, a coactivator involved in the regulated transcription of nearly all RNA polymerase II-dependent genes. Mediator functions as a bridge to convey information from gene-specific regulatory proteins to the basal RNA polymerase II transcription machinery. Mediator is recruited to promoters by direct interactions with regulatory proteins and serves as a scaffold for the assembly of a functional preinitiation complex with RNA polymerase II and the general transcription factors. This chain is Mediator of RNA polymerase II transcription subunit 26 (med26), found in Xenopus laevis (African clawed frog).